A 469-amino-acid polypeptide reads, in one-letter code: F-box only protein 3 (469 aa).

An F-box domain is found at 10–56 (PLTLESLPTDPLLLILSFLDYRDLINCCYVSRRLSQLSSHDPLWRRH). The 131-residue stretch at 278 to 408 (VATTGDITVS…FHMACPTFRV (131 aa)) folds into the ApaG domain. The segment covering 419–449 (EYEEMEEEEEEEEEEDDDDSADMDESDDDEE) has biased composition (acidic residues). The disordered stretch occupies residues 419 to 454 (EYEEMEEEEEEEEEEDDDDSADMDESDDDEEERQRR).

Part of a SCF (SKP1-cullin-F-box) protein ligase complex SCF(FBXO3) consisting of FBXO3, SKP1, CUL1 and RBX1. Interacts with PML, interaction is direct and takes place either alone or within the SCF complex.

It localises to the nucleus. Its pathway is protein modification; protein ubiquitination. Functionally, substrate recognition component of the SCF (SKP1-CUL1-F-box protein)-type E3 ubiquitin ligase complex, SCF(FBXO3), which mediates the ubiquitination and subsequent proteasomal degradation of target proteins. Mediates the ubiquitination of HIPK2 and probably that of EP300, leading to rapid degradation by the proteasome. In the presence of PML, HIPK2 ubiquitination still occurs, but degradation is prevented. PML, HIPK2 and FBXO3 may act synergically to activate p53/TP53-dependent transactivation. The SCF(FBXO3) also acts as a regulator of inflammation by mediating ubiquitination and degradation of FBXL2 in response to lipopolysaccharide (LPS). The SCF(FBXO3) complex specifically recognizes FBXL2 phosphorylated at 'Thr-404' and promotes its ubiquitination. The chain is F-box only protein 3 (FBXO3) from Bos taurus (Bovine).